A 184-amino-acid polypeptide reads, in one-letter code: Photosynthetic apparatus regulatory protein RegA (184 aa).

One can recognise a Response regulatory domain in the interval 14–128 (SLLLVDDDNA…DITNALLAKG (115 aa)). The residue at position 63 (aspartate 63) is a 4-aspartylphosphate.

Post-translationally, phosphorylated by RegB.

Functionally, member of the two-component regulatory system RegB/RegA. Involved in transactivating anaerobic expression of the photosynthetic apparatus. It is a transcriptional regulator that is responsible for activating expression of the puf, puh, and puc operons in response to a decrease in oxygen tension. The chain is Photosynthetic apparatus regulatory protein RegA (regA) from Rhodobacter capsulatus (Rhodopseudomonas capsulata).